The following is a 286-amino-acid chain: Bifunctional protein FolD (286 aa).

NADP(+) contacts are provided by residues Gly-165–Ser-167 and Ser-190.

Belongs to the tetrahydrofolate dehydrogenase/cyclohydrolase family. In terms of assembly, homodimer.

It catalyses the reaction (6R)-5,10-methylene-5,6,7,8-tetrahydrofolate + NADP(+) = (6R)-5,10-methenyltetrahydrofolate + NADPH. The enzyme catalyses (6R)-5,10-methenyltetrahydrofolate + H2O = (6R)-10-formyltetrahydrofolate + H(+). It functions in the pathway one-carbon metabolism; tetrahydrofolate interconversion. Catalyzes the oxidation of 5,10-methylenetetrahydrofolate to 5,10-methenyltetrahydrofolate and then the hydrolysis of 5,10-methenyltetrahydrofolate to 10-formyltetrahydrofolate. The polypeptide is Bifunctional protein FolD (Staphylococcus aureus (strain JH9)).